The primary structure comprises 277 residues: Eukaryotic translation initiation factor 3 subunit J (277 aa).

Residues 1–80 (MSWDDEDFAV…PAATKNTMLD (80 aa)) are disordered. Residues 23–43 (WDDEFAENDDEPVLESWEDEE) show a composition bias toward acidic residues. Residues 50–75 (KAAAAAAAKAPKKASPSPAATPAATK) are compositionally biased toward low complexity. Positions 199–230 (TVENIRQTIATLNVLMKDKEREERQARLAKVK) form a coiled coil. Positions 257–277 (DNDFDLGGNDNFDDFGEDDFM) are disordered. Residues 267–277 (NFDDFGEDDFM) show a composition bias toward acidic residues.

Belongs to the eIF-3 subunit J family. As to quaternary structure, component of the eukaryotic translation initiation factor 3 (eIF-3) complex.

Its subcellular location is the cytoplasm. Functionally, component of the eukaryotic translation initiation factor 3 (eIF-3) complex, which is involved in protein synthesis of a specialized repertoire of mRNAs and, together with other initiation factors, stimulates binding of mRNA and methionyl-tRNAi to the 40S ribosome. The eIF-3 complex specifically targets and initiates translation of a subset of mRNAs involved in cell proliferation. This is Eukaryotic translation initiation factor 3 subunit J from Kluyveromyces lactis (strain ATCC 8585 / CBS 2359 / DSM 70799 / NBRC 1267 / NRRL Y-1140 / WM37) (Yeast).